A 267-amino-acid chain; its full sequence is Indole-3-glycerol phosphate synthase (267 aa).

This sequence belongs to the TrpC family.

The enzyme catalyses 1-(2-carboxyphenylamino)-1-deoxy-D-ribulose 5-phosphate + H(+) = (1S,2R)-1-C-(indol-3-yl)glycerol 3-phosphate + CO2 + H2O. The protein operates within amino-acid biosynthesis; L-tryptophan biosynthesis; L-tryptophan from chorismate: step 4/5. The protein is Indole-3-glycerol phosphate synthase of Cupriavidus pinatubonensis (strain JMP 134 / LMG 1197) (Cupriavidus necator (strain JMP 134)).